Consider the following 269-residue polypeptide: Small ribosomal subunit protein uS3 (269 aa).

A KH type-2 domain is found at 38–106 (IREWLHKNLE…QIQLNILEVK (69 aa)). A disordered region spans residues 215-269 (AQKAARQAAQGGRGGRGGNRRGRGDRPDRRGGRRRAEAAKQSAETPAPQTENAGA). Residues 236 to 252 (GRGDRPDRRGGRRRAEA) show a composition bias toward basic and acidic residues. Residues 256–269 (SAETPAPQTENAGA) show a composition bias toward polar residues.

It belongs to the universal ribosomal protein uS3 family. Part of the 30S ribosomal subunit. Forms a tight complex with proteins S10 and S14.

Its function is as follows. Binds the lower part of the 30S subunit head. Binds mRNA in the 70S ribosome, positioning it for translation. The chain is Small ribosomal subunit protein uS3 from Cutibacterium acnes (strain DSM 16379 / KPA171202) (Propionibacterium acnes).